The sequence spans 395 residues: Tubulin-like protein CetZ1 (395 aa).

GTP-binding positions include 10 to 14 (QAGGK), 110 to 112 (GTG), Glu142, Asn169, and Asn187.

Belongs to the CetZ family.

It is found in the cytoplasm. Its function is as follows. Involved in cell shape control. Essential for the development of a rod-shaped cell type required for efficient swimming. This Haloferax volcanii (strain ATCC 29605 / DSM 3757 / JCM 8879 / NBRC 14742 / NCIMB 2012 / VKM B-1768 / DS2) (Halobacterium volcanii) protein is Tubulin-like protein CetZ1.